Consider the following 292-residue polypeptide: 2-(5''-triphosphoribosyl)-3'-dephosphocoenzyme-A synthase (292 aa).

The protein belongs to the CitG/MdcB family.

The enzyme catalyses 3'-dephospho-CoA + ATP = 2'-(5''-triphospho-alpha-D-ribosyl)-3'-dephospho-CoA + adenine. Catalyzes the formation of 2-(5''-triphosphoribosyl)-3'-dephosphocoenzyme-A, the precursor of the prosthetic group of the holo-acyl carrier protein (gamma chain) of citrate lyase, from ATP and dephospho-CoA. This is 2-(5''-triphosphoribosyl)-3'-dephosphocoenzyme-A synthase from Escherichia coli (strain ATCC 8739 / DSM 1576 / NBRC 3972 / NCIMB 8545 / WDCM 00012 / Crooks).